Consider the following 241-residue polypeptide: Probable transcriptional regulatory protein SAR11_0592 (241 aa).

Positions 1–24 are disordered; sequence MSGHSKWASIKHSKGKADKQRSKV.

Belongs to the TACO1 family.

The protein resides in the cytoplasm. The protein is Probable transcriptional regulatory protein SAR11_0592 of Pelagibacter ubique (strain HTCC1062).